The following is a 111-amino-acid chain: Large ribosomal subunit protein uL22 (111 aa).

Belongs to the universal ribosomal protein uL22 family. Part of the 50S ribosomal subunit.

Its function is as follows. This protein binds specifically to 23S rRNA; its binding is stimulated by other ribosomal proteins, e.g. L4, L17, and L20. It is important during the early stages of 50S assembly. It makes multiple contacts with different domains of the 23S rRNA in the assembled 50S subunit and ribosome. In terms of biological role, the globular domain of the protein is located near the polypeptide exit tunnel on the outside of the subunit, while an extended beta-hairpin is found that lines the wall of the exit tunnel in the center of the 70S ribosome. The sequence is that of Large ribosomal subunit protein uL22 from Geobacter sulfurreducens (strain ATCC 51573 / DSM 12127 / PCA).